The primary structure comprises 101 residues: Integration host factor subunit beta (101 aa).

This sequence belongs to the bacterial histone-like protein family. In terms of assembly, heterodimer of an alpha and a beta chain.

Its function is as follows. This protein is one of the two subunits of integration host factor, a specific DNA-binding protein that functions in genetic recombination as well as in transcriptional and translational control. The chain is Integration host factor subunit beta from Janthinobacterium sp. (strain Marseille) (Minibacterium massiliensis).